The sequence spans 179 residues: ATP synthase subunit delta (179 aa).

Belongs to the ATPase delta chain family. As to quaternary structure, F-type ATPases have 2 components, F(1) - the catalytic core - and F(0) - the membrane proton channel. F(1) has five subunits: alpha(3), beta(3), gamma(1), delta(1), epsilon(1). F(0) has three main subunits: a(1), b(2) and c(10-14). The alpha and beta chains form an alternating ring which encloses part of the gamma chain. F(1) is attached to F(0) by a central stalk formed by the gamma and epsilon chains, while a peripheral stalk is formed by the delta and b chains.

Its subcellular location is the cell membrane. Its function is as follows. F(1)F(0) ATP synthase produces ATP from ADP in the presence of a proton or sodium gradient. F-type ATPases consist of two structural domains, F(1) containing the extramembraneous catalytic core and F(0) containing the membrane proton channel, linked together by a central stalk and a peripheral stalk. During catalysis, ATP synthesis in the catalytic domain of F(1) is coupled via a rotary mechanism of the central stalk subunits to proton translocation. This protein is part of the stalk that links CF(0) to CF(1). It either transmits conformational changes from CF(0) to CF(1) or is implicated in proton conduction. The sequence is that of ATP synthase subunit delta from Staphylococcus saprophyticus subsp. saprophyticus (strain ATCC 15305 / DSM 20229 / NCIMB 8711 / NCTC 7292 / S-41).